A 971-amino-acid chain; its full sequence is MQSNLLKVLGVLAIVATLVCFIFAALGMIGAVRVGNGCYMRYSKDGNGSTDSITSTITLNANANYVNISKMLPDGTTKLIPDPNRYGEWLNTQVLVEKNQSVNLQVVGQVSLCLAYLPKNNLQFTERTRPGKSNLDDSGQMIPIPRVQDANSPPISLIMDAKNNEWRNIAELYANDKVLVSVSPNFANTDATVDDVFKGVKVTKDCTQGKTSYYPICGKYSIYSGKYVTACELKQNYWKGNVHREECYCVFGCIYKEDSDPWVCDMANAASHCCTSLVCDSLPAWINHYSNMPEAYKDDGSFTFSWSDKSKNLLIEYEDLQCSNNVNIPPNGQCPDIVNNRSPKDKNYIGGVSCTSGICKDGDFQKNRKFWYTADGKGGKGPTGLIYQMNDIGSVSQALPSKLEFAKFVPETEQPPEYKDKNGKYLYKVIYNIPFNSNIEKSYLQYRLWSPTSQDASKNTGGYVLNIKQTKCYRENGNSFKDIFDDRGRVQYIIVKSSENPNTSGKTYSPQGINVDSDGKSHFNANESGYIWMKILNDPSNNLKDYKDSEGSYKVHFSTSLKVGSFTIKVMNPLLQLFKTKVQDAATSIFKNMVCYKATDNSSCTNFFTYIKAILILYVMTYGAMFLLGFAKINQKELVIRIAKIGVVSGLINGNTFEFFNNYLFDAITNFSDSIIANMSGYSLFTSTNTISNPFMFLDAIMSKIFFSQTFIAQLLSLLSLGLSGIIYFIITFIAICIVIITTLRAIAVYIMAFMATCILIGIAPLFISFLLFDFTRYLFDNWVRFTIRYMIEPVVMMAGIIVLTQLFTIYLDFVLGYSVCWKCTLPIKIPFIGTILPIALLNVPIFCINWFAPWGMDYMSGMMGVNMQNIVALVIIAYGMYGYVEFSGRMVAKLTSAAGPSATQIGGRMSHDAGQKVLSQIGMDYRTRQGITGRAKSRLEQRNRTLEHAEQNSKKYKKRIGENTNEETLK.

A signal peptide spans methionine 1–alanine 24. The tract at residues arginine 127–arginine 146 is disordered. 6 consecutive transmembrane segments (helical) span residues isoleucine 611 to alanine 631, leucine 721 to isoleucine 741, alanine 753 to phenylalanine 773, valine 795 to valine 815, phenylalanine 832 to phenylalanine 852, and glycine 865 to valine 885. The disordered stretch occupies residues threonine 933–lysine 971. Positions serine 938–serine 954 are enriched in basic and acidic residues.

Belongs to the TrbL/VirB6 family.

It is found in the cell membrane. This is an uncharacterized protein from Rickettsia prowazekii (strain Madrid E).